The chain runs to 275 residues: NH(3)-dependent NAD(+) synthetase (275 aa).

An ATP-binding site is contributed by 46 to 53 (GISGGQDS). Aspartate 52 contributes to the Mg(2+) binding site. Position 140 (arginine 140) interacts with deamido-NAD(+). Position 160 (threonine 160) interacts with ATP. Glutamate 165 is a binding site for Mg(2+). Deamido-NAD(+) is bound by residues lysine 173 and aspartate 180. Residues lysine 189 and threonine 211 each contribute to the ATP site. 260-261 (HK) provides a ligand contact to deamido-NAD(+).

This sequence belongs to the NAD synthetase family. Homodimer.

The catalysed reaction is deamido-NAD(+) + NH4(+) + ATP = AMP + diphosphate + NAD(+) + H(+). It functions in the pathway cofactor biosynthesis; NAD(+) biosynthesis; NAD(+) from deamido-NAD(+) (ammonia route): step 1/1. In terms of biological role, catalyzes the ATP-dependent amidation of deamido-NAD to form NAD. Uses ammonia as a nitrogen source. This Escherichia coli O17:K52:H18 (strain UMN026 / ExPEC) protein is NH(3)-dependent NAD(+) synthetase.